The following is a 560-amino-acid chain: NAD-dependent malic enzyme (560 aa).

Y100 functions as the Proton donor in the catalytic mechanism. Residue R153 participates in NAD(+) binding. K171 functions as the Proton acceptor in the catalytic mechanism. 3 residues coordinate a divalent metal cation: E242, D243, and D266. The NAD(+) site is built by D266 and N413.

Belongs to the malic enzymes family. In terms of assembly, homotetramer. It depends on Mg(2+) as a cofactor. Mn(2+) is required as a cofactor.

It carries out the reaction (S)-malate + NAD(+) = pyruvate + CO2 + NADH. The catalysed reaction is oxaloacetate + H(+) = pyruvate + CO2. The protein is NAD-dependent malic enzyme of Psychromonas ingrahamii (strain DSM 17664 / CCUG 51855 / 37).